The sequence spans 125 residues: Apoptosis inhibitor Rv3655c (125 aa).

Positions 1–33 are cleaved as a signal peptide; that stretch reads MEAALAIATLVLVLVLCLAGVTAVSMQVRCIDA.

As to quaternary structure, interacts with human E3 ubiquitin-protein ligase RNF213.

Its subcellular location is the secreted. The protein localises to the host cytoplasm. Its function is as follows. Effector protein that participates in the suppression of macrophage apoptosis by blocking the extrinsic pathway. Interferes with caspase-8 activation and binds to the host E3 ubiquitin-protein ligase RNF213, whose fusion partners have anti-apoptotic function. This is Apoptosis inhibitor Rv3655c from Mycobacterium tuberculosis (strain ATCC 25618 / H37Rv).